The primary structure comprises 159 residues: Phosphopantetheine adenylyltransferase (159 aa).

Threonine 9 contacts substrate. Residues 9-10 (TF) and histidine 17 contribute to the ATP site. Residues lysine 41, leucine 73, and arginine 87 each contribute to the substrate site. ATP contacts are provided by residues 88-90 (GLR), glutamate 98, and 123-129 (YSFISST).

This sequence belongs to the bacterial CoaD family. In terms of assembly, homohexamer. It depends on Mg(2+) as a cofactor.

The protein resides in the cytoplasm. The enzyme catalyses (R)-4'-phosphopantetheine + ATP + H(+) = 3'-dephospho-CoA + diphosphate. Its pathway is cofactor biosynthesis; coenzyme A biosynthesis; CoA from (R)-pantothenate: step 4/5. Functionally, reversibly transfers an adenylyl group from ATP to 4'-phosphopantetheine, yielding dephospho-CoA (dPCoA) and pyrophosphate. In Pseudomonas fluorescens (strain ATCC BAA-477 / NRRL B-23932 / Pf-5), this protein is Phosphopantetheine adenylyltransferase.